The primary structure comprises 156 residues: Small ribosomal subunit protein uS7 (156 aa).

Belongs to the universal ribosomal protein uS7 family. Part of the 30S ribosomal subunit. Contacts proteins S9 and S11.

In terms of biological role, one of the primary rRNA binding proteins, it binds directly to 16S rRNA where it nucleates assembly of the head domain of the 30S subunit. Is located at the subunit interface close to the decoding center, probably blocks exit of the E-site tRNA. This is Small ribosomal subunit protein uS7 from Heliobacterium modesticaldum (strain ATCC 51547 / Ice1).